The following is a 126-amino-acid chain: Holo-[acyl-carrier-protein] synthase (126 aa).

Residues D9 and E58 each coordinate Mg(2+).

The protein belongs to the P-Pant transferase superfamily. AcpS family. Requires Mg(2+) as cofactor.

It is found in the cytoplasm. The enzyme catalyses apo-[ACP] + CoA = holo-[ACP] + adenosine 3',5'-bisphosphate + H(+). Functionally, transfers the 4'-phosphopantetheine moiety from coenzyme A to a Ser of acyl-carrier-protein. This is Holo-[acyl-carrier-protein] synthase from Salmonella choleraesuis (strain SC-B67).